We begin with the raw amino-acid sequence, 1354 residues long: RNA-directed RNA polymerase VP1 (1354 aa).

It catalyses the reaction RNA(n) + a ribonucleoside 5'-triphosphate = RNA(n+1) + diphosphate. Its function is as follows. RNA-directed RNA polymerase that is involved in transcription and genome replication. Following infection, it catalyzes the synthesis of fully conservative plus strands. After core assembly, which consists in recruitment of one capped plus-strand for each genomic segments and polymerase complexes, the polymerase switches mode and catalyzes the synthesis of complementary minus-strands. The polypeptide is RNA-directed RNA polymerase VP1 (Cryphonectria parasitica mycoreovirus 1 (strain 9B21) (CpMYRV-1)).